Here is a 644-residue protein sequence, read N- to C-terminus: Exoribonuclease 2 (644 aa).

The RNB domain occupies 189–516; sequence RQDLTALNFV…NHRLLKAVIK (328 aa). An S1 motif domain is found at 561–643; that stretch reads NTRFAAEIID…ETRSIIARPA (83 aa).

Belongs to the RNR ribonuclease family. RNase II subfamily.

The protein resides in the cytoplasm. The catalysed reaction is Exonucleolytic cleavage in the 3'- to 5'-direction to yield nucleoside 5'-phosphates.. Involved in mRNA degradation. Hydrolyzes single-stranded polyribonucleotides processively in the 3' to 5' direction. This is Exoribonuclease 2 from Salmonella choleraesuis (strain SC-B67).